Consider the following 119-residue polypeptide: Holo-[acyl-carrier-protein] synthase (119 aa).

Positions 8 and 58 each coordinate Mg(2+).

The protein belongs to the P-Pant transferase superfamily. AcpS family. Requires Mg(2+) as cofactor.

Its subcellular location is the cytoplasm. It catalyses the reaction apo-[ACP] + CoA = holo-[ACP] + adenosine 3',5'-bisphosphate + H(+). Functionally, transfers the 4'-phosphopantetheine moiety from coenzyme A to a Ser of acyl-carrier-protein. This Bacillus cereus (strain G9842) protein is Holo-[acyl-carrier-protein] synthase.